Reading from the N-terminus, the 140-residue chain is Large ribosomal subunit protein bL17 (140 aa).

The protein belongs to the bacterial ribosomal protein bL17 family. Part of the 50S ribosomal subunit. Contacts protein L32.

The polypeptide is Large ribosomal subunit protein bL17 (Rhizobium leguminosarum bv. trifolii (strain WSM2304)).